Consider the following 447-residue polypeptide: Chordin-like protein 1 (447 aa).

The first 22 residues, 1–22 (MDGMKYIISLFFIFVFLEGSKT), serve as a signal peptide directing secretion. VWFC domains lie at 30–95 (TYCV…PRCP) and 108–174 (KSCE…RVCR). An N-linked (GlcNAc...) asparagine glycan is attached at N113. The short motif at 174-176 (RGD) is the Cell attachment site element. The segment at 200–224 (SYLRSPYDPPPNRQAGGLPRFPGSR) is disordered. Residues 253-318 (QVCVSNGKTY…IDGKCCKVCP (66 aa)) form the VWFC 3 domain. A glycan (N-linked (GlcNAc...) asparagine) is linked at N286.

May be glycosylated. In terms of tissue distribution, expressed in heart, brain, lung, liver, kidney and testis.

It localises to the secreted. Its function is as follows. Seems to antagonize the function of BMP4 by binding to it and preventing its interaction with receptors. Alters the fate commitment of neural stem cells from gliogenesis to neurogenesis. Contributes to neuronal differentiation of neural stem cells in the brain by preventing the adoption of a glial fate. May play a crucial role in dorsoventral axis formation. Antagonizes the function of BMP7 and may thus play an important role in the embryonic bone formation. Shows no inhibitory effect on the inducing activity of BMP2. Plays a role during anterior segment eye development. The polypeptide is Chordin-like protein 1 (Chrdl1) (Mus musculus (Mouse)).